The chain runs to 107 residues: UPF0145 protein MAB_3451c (107 aa).

Belongs to the UPF0145 family.

The protein is UPF0145 protein MAB_3451c of Mycobacteroides abscessus (strain ATCC 19977 / DSM 44196 / CCUG 20993 / CIP 104536 / JCM 13569 / NCTC 13031 / TMC 1543 / L948) (Mycobacterium abscessus).